Here is a 1019-residue protein sequence, read N- to C-terminus: MSYGWYHGNITRSKAEDLLSQAGKDGSYLVRDSESVCRAYALCVLNQNCVHTYRILQNAEHQLSVQASEGVPMRFFTNLVELIEFYRRENVGLVTHLQYPIEKEEEGPEEPDEEQEPAPPNVPPRNFAFTPPSETKECQTAIERAPAANASLLLSETLLQRFQDTDSRCIPEEHLQAICDYFSLHIVSDCDMVRTGSQTLPQFKKLLMTLCTGLHRELTRTLPTLESLQVAIDPQLSPGFKQRSPLPGDSATNNMVNKLTHLTSMVSNLEEKVKTVLMEGAAVKHRRSLIPPIIFEVKADSIGISQKTHLKVDVETGKLIIKKSKDGPDDKFYPSKKILQLIKSQKFPHKLVIVLETEKEKTQRKEYVFADSKKREGFCQLLQQMKNKHSGQSEPDMLSIFIGTWNMGDAPPPKNITPWFQCKGQGKTRDDTADYIEHDIYVIGTQEDPLSEKEWTDTLIHSLREITSVEYKVITTQTLWNIRIVVLAKPEHAHRISHVCTNSVKTGIANTLGNKGAVGASFMFNGTSFGFINSHLTSGSEKKLRRNQNYFNILRFLVLGDKKLSPFNFTHRFNHLFWLGDLNYRLQLPNTEAENIIQKIKQQQHQELLPHDQLNLERRESLIFFQFHEEEITFPPTYRYERGSRERYCYTKQKATGIKYNLPSWCDRILWKSYPQMHILCQSYGCTDDITTSDHSPVFGTFQVGVTSQFVSKNNPGDSGDLEAQGHIELMNCKATLYTKSHTKFYIEFHSPCLENMVKSSEAEDQEGNNGTLVVKFGVLPKLTPIISDLEYLLDQHLLICIKSSDTDESYGEGCIALRKEDTEQQFPFCTILTHHGEETGLFCGEICLPASGGKQREKLYDFVKIEKDETVAQKQLKHPYSQSMEQSRIMKSISEKSAMIARMRAAPETQNSMDHTASVAAISSQAKQSPPTTPPGFRGSEPRQKPGSPVQGRGDTPITSPPRTTLSTQKFSHSNTNRTAPAARPQDSLQITVPSDPHEMVDNPLYGPVNNTLYPPTA.

The 97-residue stretch at 5-101 (WYHGNITRSK…GLVTHLQYPI (97 aa)) folds into the SH2 domain. Over residues 103–116 (KEEEGPEEPDEEQE) the composition is skewed to acidic residues. 2 disordered regions span residues 103–133 (KEEE…TPPS) and 909–1019 (ETQN…PPTA). The short motif at 120-125 (PNVPPR) is the SH3-binding 1 element. Composition is skewed to polar residues over residues 909–931 (ETQN…KQSP) and 958–980 (PITS…TNRT). The SH3-binding 2 signature appears at 966 to 971 (TLSTQK). Residues 1004–1007 (NPLY) carry the NPXY motif motif. Tyr-1007 is subject to Phosphotyrosine. Over residues 1010-1019 (VNNTLYPPTA) the composition is skewed to polar residues.

The protein belongs to the inositol 1,4,5-trisphosphate 5-phosphatase family. Tyrosine phosphorylated by the members of the SRC family after exposure to a diverse array of extracellular stimuli.

The protein resides in the cytoplasm. It is found in the cell membrane. It localises to the membrane raft. The protein localises to the cytoskeleton. The enzyme catalyses a 1,2-diacyl-sn-glycero-3-phospho-(1D-myo-inositol-3,4,5-trisphosphate) + H2O = a 1,2-diacyl-sn-glycero-3-phospho-(1D-myo-inositol-3,4-bisphosphate) + phosphate. The catalysed reaction is 1D-myo-inositol 1,3,4,5-tetrakisphosphate + H2O = 1D-myo-inositol 1,3,4-trisphosphate + phosphate. It carries out the reaction a 1,2-diacyl-sn-glycero-3-phospho-(1D-myo-inositol-4,5-bisphosphate) + H2O = a 1,2-diacyl-sn-glycero-3-phospho-(1D-myo-inositol 4-phosphate) + phosphate. Its function is as follows. Phosphatidylinositol (PtdIns) phosphatase that specifically hydrolyzes the 5-phosphate of phosphatidylinositol-3,4,5-trisphosphate (PtdIns(3,4,5)P3) to produce PtdIns(3,4)P2, thereby negatively regulating the PI3K (phosphoinositide 3-kinase) pathways. Able also to hydrolyzes the 5-phosphate of phosphatidylinositol-4,5-bisphosphate (PtdIns(4,5)P3) and inositol 1,3,4,5-tetrakisphosphate. Acts as a negative regulator of B-cell antigen receptor signaling. Mediates signaling from the FC-gamma-RIIB receptor (FCGR2B), playing a central role in terminating signal transduction from activating immune/hematopoietic cell receptor systems. Acts as a negative regulator of myeloid cell proliferation/survival and chemotaxis, mast cell degranulation, immune cells homeostasis, integrin alpha-IIb/beta-3 signaling in platelets and JNK signaling in B-cells. The protein is Phosphatidylinositol 3,4,5-trisphosphate 5-phosphatase 1 (inpp5d) of Xenopus laevis (African clawed frog).